The primary structure comprises 692 residues: uncharacterized protein (692 aa).

The N-terminal 39 residues, 1-39, are a transit peptide targeting the chloroplast; that stretch reads MLRLPSSMPIVSFPANPNLLINPQPSWPSRRGNSAVVVS. The Protein kinase domain maps to 189–523; the sequence is EISPEPVAAA…RLESLLSESL (335 aa). ATP is bound by residues 195 to 203 and lysine 218; that span reads VAAASLGQV. Aspartate 343 serves as the catalytic Proton acceptor.

It belongs to the protein kinase superfamily. ADCK protein kinase family.

The protein localises to the plastid. Its subcellular location is the chloroplast. It is found in the plastoglobule. This is an uncharacterized protein from Arabidopsis thaliana (Mouse-ear cress).